We begin with the raw amino-acid sequence, 270 residues long: ATP synthase subunit a (270 aa).

5 helical membrane-spanning segments follow: residues 37-57 (NVHIDSLFFSVFTGMLFLWVF), 98-118 (IAPLALTIFCWVILMNLMDLV), 143-163 (DVNITMAMALGVFALMIYYSI), 217-237 (VVFILIAAMLPWYLQWVGALP), and 239-259 (AIFHILVILIQAFVFMMLTIV).

It belongs to the ATPase A chain family. F-type ATPases have 2 components, CF(1) - the catalytic core - and CF(0) - the membrane proton channel. CF(1) has five subunits: alpha(3), beta(3), gamma(1), delta(1), epsilon(1). CF(0) has three main subunits: a(1), b(2) and c(9-12). The alpha and beta chains form an alternating ring which encloses part of the gamma chain. CF(1) is attached to CF(0) by a central stalk formed by the gamma and epsilon chains, while a peripheral stalk is formed by the delta and b chains.

The protein localises to the cell inner membrane. Functionally, key component of the proton channel; it plays a direct role in the translocation of protons across the membrane. This chain is ATP synthase subunit a, found in Aliivibrio fischeri (strain ATCC 700601 / ES114) (Vibrio fischeri).